A 118-amino-acid chain; its full sequence is Large ribosomal subunit protein bL20 (118 aa).

The protein belongs to the bacterial ribosomal protein bL20 family.

In terms of biological role, binds directly to 23S ribosomal RNA and is necessary for the in vitro assembly process of the 50S ribosomal subunit. It is not involved in the protein synthesizing functions of that subunit. The sequence is that of Large ribosomal subunit protein bL20 from Staphylococcus epidermidis (strain ATCC 35984 / DSM 28319 / BCRC 17069 / CCUG 31568 / BM 3577 / RP62A).